Consider the following 392-residue polypeptide: Putative cystathionine gamma-lyase (392 aa).

Residues 1–10 show a composition bias toward polar residues; sequence MSDSATTDSA. The segment at 1–41 is disordered; it reads MSDSATTDSAGTGGERSASAPGDGTRAVRAGLPEPVKHEPT. Position 216 is an N6-(pyridoxal phosphate)lysine (Lys-216).

It belongs to the trans-sulfuration enzymes family. Pyridoxal 5'-phosphate is required as a cofactor.

The protein resides in the cytoplasm. The enzyme catalyses L,L-cystathionine + H2O = 2-oxobutanoate + L-cysteine + NH4(+). The protein operates within amino-acid biosynthesis; L-cysteine biosynthesis; L-cysteine from L-homocysteine and L-serine: step 2/2. This is Putative cystathionine gamma-lyase (cysA) from Streptomyces coelicolor (strain ATCC BAA-471 / A3(2) / M145).